The primary structure comprises 686 residues: Potassium-transporting ATPase ATP-binding subunit 2 (686 aa).

Transmembrane regions (helical) follow at residues Met-37–Phe-57, Met-64–Phe-84, Leu-223–Ile-243, and Val-255–Ile-275. The active-site 4-aspartylphosphate intermediate is the Asp-306. Residues Asp-343, Glu-347, Phe-376–Ser-383, and Lys-395 each bind ATP. Mg(2+) contacts are provided by Asp-518 and Asp-522. The next 3 helical transmembrane spans lie at Phe-588–Met-608, Ala-616–Met-636, and Val-656–Ile-676.

This sequence belongs to the cation transport ATPase (P-type) (TC 3.A.3) family. Type IA subfamily. As to quaternary structure, the system is composed of three essential subunits: KdpA, KdpB and KdpC.

It localises to the cell membrane. The catalysed reaction is K(+)(out) + ATP + H2O = K(+)(in) + ADP + phosphate + H(+). Its function is as follows. Part of the high-affinity ATP-driven potassium transport (or Kdp) system, which catalyzes the hydrolysis of ATP coupled with the electrogenic transport of potassium into the cytoplasm. This subunit is responsible for energy coupling to the transport system and for the release of the potassium ions to the cytoplasm. The chain is Potassium-transporting ATPase ATP-binding subunit 2 from Listeria innocua serovar 6a (strain ATCC BAA-680 / CLIP 11262).